The following is a 123-amino-acid chain: Large ribosomal subunit protein bL12 (123 aa).

K84 is subject to N6-methyllysine. The interval 94-123 (PATLKEGMSKEDGDEAKTKLEEAGASVELK) is disordered. The span at 100–115 (GMSKEDGDEAKTKLEE) shows a compositional bias: basic and acidic residues.

It belongs to the bacterial ribosomal protein bL12 family. Homodimer. Part of the ribosomal stalk of the 50S ribosomal subunit. Forms a multimeric L10(L12)X complex, where L10 forms an elongated spine to which 2 to 4 L12 dimers bind in a sequential fashion. Binds GTP-bound translation factors.

Its function is as follows. Seems to be the binding site for several of the factors involved in protein synthesis and appears to be essential for accurate translation. In terms of biological role, forms part of the ribosomal stalk which helps the ribosome interact with GTP-bound translation factors. Is thus essential for accurate translation. The protein is Large ribosomal subunit protein bL12 of Halophilic eubacterium NRCC 41227.